An 83-amino-acid chain; its full sequence is Small ribosomal subunit protein bS18A (83 aa).

It belongs to the bacterial ribosomal protein bS18 family. Part of the 30S ribosomal subunit. Forms a tight heterodimer with protein bS6.

Binds as a heterodimer with protein bS6 to the central domain of the 16S rRNA, where it helps stabilize the platform of the 30S subunit. This Nocardia farcinica (strain IFM 10152) protein is Small ribosomal subunit protein bS18A.